The sequence spans 354 residues: Protein C42 (354 aa).

Positions 349-352 (KRKK) match the Nuclear localization signal motif.

It belongs to the baculoviridae C42 protein family.

It localises to the host nucleus. This chain is Protein C42, found in Orgyia pseudotsugata (Douglas-fir tussock moth).